A 505-amino-acid chain; its full sequence is Glutamate--cysteine ligase (505 aa).

Belongs to the glutamate--cysteine ligase type 1 family. Type 1 subfamily.

The enzyme catalyses L-cysteine + L-glutamate + ATP = gamma-L-glutamyl-L-cysteine + ADP + phosphate + H(+). It participates in sulfur metabolism; glutathione biosynthesis; glutathione from L-cysteine and L-glutamate: step 1/2. This chain is Glutamate--cysteine ligase, found in Wigglesworthia glossinidia brevipalpis.